Reading from the N-terminus, the 347-residue chain is Quinolinate synthase (347 aa).

Residues His-47 and Ser-68 each contribute to the iminosuccinate site. Cys-113 lines the [4Fe-4S] cluster pocket. Residues 139 to 141 (YAN) and Ser-156 contribute to the iminosuccinate site. Cys-200 lines the [4Fe-4S] cluster pocket. Iminosuccinate contacts are provided by residues 226–228 (HPE) and Thr-243. Residue Cys-297 coordinates [4Fe-4S] cluster.

It belongs to the quinolinate synthase family. Type 1 subfamily. [4Fe-4S] cluster serves as cofactor.

The protein resides in the cytoplasm. It catalyses the reaction iminosuccinate + dihydroxyacetone phosphate = quinolinate + phosphate + 2 H2O + H(+). The protein operates within cofactor biosynthesis; NAD(+) biosynthesis; quinolinate from iminoaspartate: step 1/1. Its function is as follows. Catalyzes the condensation of iminoaspartate with dihydroxyacetone phosphate to form quinolinate. The sequence is that of Quinolinate synthase from Shigella boydii serotype 4 (strain Sb227).